The following is a 299-amino-acid chain: GTPase Era (299 aa).

The region spanning Lys-4 to Glu-171 is the Era-type G domain. The interval Gly-12 to Ser-19 is G1. Residue Gly-12–Ser-19 coordinates GTP. The tract at residues Gln-38–Asn-42 is G2. Residues Asp-59–Gly-62 form a G3 region. GTP contacts are provided by residues Asp-59 to Ile-63 and Asn-121 to Asp-124. The segment at Asn-121–Asp-124 is G4. Positions Ile-150–Ala-152 are G5. Positions Thr-202 to Lys-280 constitute a KH type-2 domain.

This sequence belongs to the TRAFAC class TrmE-Era-EngA-EngB-Septin-like GTPase superfamily. Era GTPase family. Monomer.

Its subcellular location is the cytoplasm. The protein resides in the cell membrane. In terms of biological role, an essential GTPase that binds both GDP and GTP, with rapid nucleotide exchange. Plays a role in 16S rRNA processing and 30S ribosomal subunit biogenesis and possibly also in cell cycle regulation and energy metabolism. The sequence is that of GTPase Era from Streptococcus suis (strain 98HAH33).